The primary structure comprises 970 residues: Pentatricopeptide repeat-containing protein At1g18485 (970 aa).

PPR repeat units lie at residues 119–149 (DDVL…LRSK), 150–185 (NLFQ…DLLP), 186–220 (DHFT…GLVE), 221–251 (DVFV…MPER), 252–282 (NLVS…MMEE), 291–325 (DVAT…RLDK), 326–356 (ELVL…NNNK), 357–391 (NVVS…GEDV), 394–428 (DEVT…EFVY), 429–459 (NELV…IRSK), 460–494 (TVNS…GLLP), 495–529 (DSFT…WLER), 530–560 (DLFV…MEDK), 561–595 (SLVS…GIQL), 597–630 (GISM…LLED), 631–661 (DAFI…LKEK), 662–696 (STAS…GHNP), 697–727 (DDLT…MKSS), and 733–764 (NLKH…MSEE). The segment at 770-845 (WKSLLSSCRI…AGCSWIELNR (76 aa)) is type E motif. The type E(+) motif stretch occupies residues 846 to 875 (KVFSFVVGERFLDGFEEIKSLWSILEMKIS). The tract at residues 876 to 970 (KMGYRPDTMS…NGVCSCGDYW (95 aa)) is type DYW motif.

The protein belongs to the PPR family. PCMP-H subfamily.

In Arabidopsis thaliana (Mouse-ear cress), this protein is Pentatricopeptide repeat-containing protein At1g18485 (PCMP-H8).